A 122-amino-acid polypeptide reads, in one-letter code: Aspartate 1-decarboxylase (122 aa).

Ser25 acts as the Schiff-base intermediate with substrate; via pyruvic acid in catalysis. Ser25 carries the pyruvic acid (Ser) modification. Thr57 provides a ligand contact to substrate. The active-site Proton donor is Tyr58. 73–75 provides a ligand contact to substrate; it reads GAA.

This sequence belongs to the PanD family. As to quaternary structure, heterooctamer of four alpha and four beta subunits. Pyruvate serves as cofactor. Post-translationally, is synthesized initially as an inactive proenzyme, which is activated by self-cleavage at a specific serine bond to produce a beta-subunit with a hydroxyl group at its C-terminus and an alpha-subunit with a pyruvoyl group at its N-terminus.

It is found in the cytoplasm. It catalyses the reaction L-aspartate + H(+) = beta-alanine + CO2. Its pathway is cofactor biosynthesis; (R)-pantothenate biosynthesis; beta-alanine from L-aspartate: step 1/1. Its function is as follows. Catalyzes the pyruvoyl-dependent decarboxylation of aspartate to produce beta-alanine. In Bordetella avium (strain 197N), this protein is Aspartate 1-decarboxylase.